The following is a 132-amino-acid chain: MKGLGSTIVRSLPNGARLVCADNTGAKELEVIAVKNYVGTVRRLPAGGVGHMVFVSVKKGTPEMRKQVLPAIIIRQKKEYKRADGTRVKFEDNAAVIVTPEGTPKGSEIKGPVSKEAAERWPGVSRLAKIIH.

Belongs to the universal ribosomal protein uL14 family. In terms of assembly, part of the 50S ribosomal subunit. Forms a cluster with proteins L3 and L24e, part of which may contact the 16S rRNA in 2 intersubunit bridges.

Binds to 23S rRNA. Forms part of two intersubunit bridges in the 70S ribosome. The chain is Large ribosomal subunit protein uL14 from Methanococcus maripaludis (strain C5 / ATCC BAA-1333).